The chain runs to 570 residues: Putative diflavin flavoprotein A 5 (570 aa).

The interval 38 to 231 (ERGTTSNSYV…LQVRLYAVGH (194 aa)) is zinc metallo-hydrolase. Residues 260–402 (VALLYASAYG…VGTDFAQTLK (143 aa)) enclose the Flavodoxin-like domain. The flavodoxin-reductase-like stretch occupies residues 421–570 (VGRIVGSVCV…INHRKTGNHY (150 aa)).

The protein in the N-terminal section; belongs to the zinc metallo-hydrolase group 3 family. It in the C-terminal section; belongs to the flavodoxin reductase family. Fe cation serves as cofactor.

Functionally, mediates electron transfer from NADH to oxygen, reducing it to water. This modular protein has 3 redox cofactors, in other organisms the same activity requires 2 or 3 proteins. This chain is Putative diflavin flavoprotein A 5 (dfa5), found in Nostoc sp. (strain PCC 7120 / SAG 25.82 / UTEX 2576).